The following is a 301-amino-acid chain: Homeobox protein Hox-D13 (301 aa).

Disordered regions lie at residues 1-20 (MDGL…TPGQ) and 55-75 (GERS…PGSG). Gly residues predominate over residues 8-18 (SSGGGGGGGTP). The homeobox DNA-binding region spans 234–293 (GRKKRVPYTKLQLKELENEYAINKFINKDKRRRISAATNLSERQVTIWFQNRRVKDKKIV).

The protein belongs to the Abd-B homeobox family.

It localises to the nucleus. Functionally, sequence-specific transcription factor that binds gene promoters and activates their transcription. Part of a developmental regulatory system that provides cells with specific positional identities on the anterior-posterior axis. This Gallus gallus (Chicken) protein is Homeobox protein Hox-D13 (HOXD13).